Reading from the N-terminus, the 65-residue chain is Sec-independent protein translocase protein TatA (65 aa).

The helical transmembrane segment at 9 to 29 threads the bilayer; sequence ILIIVLLVVVVFGVGKLPQVG. The disordered stretch occupies residues 40 to 65; sequence RKASTGEDAKEEVETKEETKPAEKSE. The span at 43–65 shows a compositional bias: basic and acidic residues; that stretch reads STGEDAKEEVETKEETKPAEKSE.

The protein belongs to the TatA/E family. As to quaternary structure, forms a complex with TatC.

The protein localises to the cell membrane. Functionally, part of the twin-arginine translocation (Tat) system that transports large folded proteins containing a characteristic twin-arginine motif in their signal peptide across membranes. TatA could form the protein-conducting channel of the Tat system. The polypeptide is Sec-independent protein translocase protein TatA (Dehalococcoides mccartyi (strain ATCC BAA-2100 / JCM 16839 / KCTC 5957 / BAV1)).